Consider the following 463-residue polypeptide: Kynureninase 2 (463 aa).

Residues leucine 134, threonine 135, 162 to 165 (FPSD), aspartate 247, histidine 250, and tyrosine 272 contribute to the pyridoxal 5'-phosphate site. Lysine 273 carries the post-translational modification N6-(pyridoxal phosphate)lysine. Pyridoxal 5'-phosphate-binding residues include tryptophan 312 and asparagine 340.

This sequence belongs to the kynureninase family. As to quaternary structure, homodimer. Pyridoxal 5'-phosphate serves as cofactor.

It localises to the cytoplasm. The enzyme catalyses L-kynurenine + H2O = anthranilate + L-alanine + H(+). It catalyses the reaction 3-hydroxy-L-kynurenine + H2O = 3-hydroxyanthranilate + L-alanine + H(+). It functions in the pathway amino-acid degradation; L-kynurenine degradation; L-alanine and anthranilate from L-kynurenine: step 1/1. Its pathway is cofactor biosynthesis; NAD(+) biosynthesis; quinolinate from L-kynurenine: step 2/3. Catalyzes the cleavage of L-kynurenine (L-Kyn) and L-3-hydroxykynurenine (L-3OHKyn) into anthranilic acid (AA) and 3-hydroxyanthranilic acid (3-OHAA), respectively. This chain is Kynureninase 2 (bna5-2), found in Aspergillus niger (strain ATCC MYA-4892 / CBS 513.88 / FGSC A1513).